We begin with the raw amino-acid sequence, 379 residues long: F-box protein At5g18160 (379 aa).

The tract at residues 1–26 (MDKQDEKKQGTTKSSSTLTTRCSHGN) is disordered. Residues 11–26 (TTKSSSTLTTRCSHGN) are compositionally biased toward polar residues. The 47-residue stretch at 28–74 (ISQSNSIPLDITIEILSRLPAKSIVRSRSVSKLWSSITTTPEFIKHR) folds into the F-box domain.

The protein is F-box protein At5g18160 of Arabidopsis thaliana (Mouse-ear cress).